The chain runs to 88 residues: uncharacterized protein (88 aa).

The tract at residues Met1 to Ala88 is disordered. Positions Tyr21–Asn65 are enriched in basic and acidic residues.

Functionally, involved in osmoadaptation. This is an uncharacterized protein from Emericella nidulans (strain FGSC A4 / ATCC 38163 / CBS 112.46 / NRRL 194 / M139) (Aspergillus nidulans).